We begin with the raw amino-acid sequence, 199 residues long: NAD(P)H dehydrogenase (quinone) (199 aa).

The Flavodoxin-like domain occupies 4–190 (VLVLYYSAYG…AGARYQGRRV (187 aa)). FMN contacts are provided by residues 10-15 (SAYGHI) and 78-80 (TRF). Tyrosine 12 contributes to the NAD(+) binding site. Tryptophan 98 is a substrate binding site. Residues 113-119 (STATQHG) and histidine 134 each bind FMN.

The protein belongs to the WrbA family. The cofactor is FMN.

It catalyses the reaction a quinone + NADH + H(+) = a quinol + NAD(+). The catalysed reaction is a quinone + NADPH + H(+) = a quinol + NADP(+). This is NAD(P)H dehydrogenase (quinone) from Methylocella silvestris (strain DSM 15510 / CIP 108128 / LMG 27833 / NCIMB 13906 / BL2).